The following is a 486-amino-acid chain: UDP-N-acetylmuramate--L-alanine ligase (486 aa).

123 to 129 (GTHGKTT) provides a ligand contact to ATP.

This sequence belongs to the MurCDEF family.

It localises to the cytoplasm. It catalyses the reaction UDP-N-acetyl-alpha-D-muramate + L-alanine + ATP = UDP-N-acetyl-alpha-D-muramoyl-L-alanine + ADP + phosphate + H(+). Its pathway is cell wall biogenesis; peptidoglycan biosynthesis. Its function is as follows. Cell wall formation. The polypeptide is UDP-N-acetylmuramate--L-alanine ligase (Pseudomonas fluorescens (strain Pf0-1)).